Consider the following 342-residue polypeptide: Phosphoribosylformylglycinamidine cyclo-ligase (342 aa).

It belongs to the AIR synthase family.

Its subcellular location is the cytoplasm. It carries out the reaction 2-formamido-N(1)-(5-O-phospho-beta-D-ribosyl)acetamidine + ATP = 5-amino-1-(5-phospho-beta-D-ribosyl)imidazole + ADP + phosphate + H(+). Its pathway is purine metabolism; IMP biosynthesis via de novo pathway; 5-amino-1-(5-phospho-D-ribosyl)imidazole from N(2)-formyl-N(1)-(5-phospho-D-ribosyl)glycinamide: step 2/2. The protein is Phosphoribosylformylglycinamidine cyclo-ligase of Staphylococcus aureus (strain MSSA476).